A 142-amino-acid polypeptide reads, in one-letter code: Hemoglobin subunit alpha-1 (142 aa).

An N-acetylserine modification is found at S1. Positions 1–142 (SLSVKDKAAV…VALALAERYR (142 aa)) constitute a Globin domain. H59 lines the O2 pocket. Heme b is bound at residue H88.

Belongs to the globin family. In terms of assembly, hb 1 is a heterotetramer of two alpha-1 and two beta-1 chains. In terms of tissue distribution, red blood cells.

In terms of biological role, involved in oxygen transport from gills to the various peripheral tissues. The sequence is that of Hemoglobin subunit alpha-1 (hba1) from Gobionotothen gibberifrons (Humped rockcod).